The primary structure comprises 543 residues: MNNLTSTKFIFVTGGVVSSLGKGLAAASIGALLQARGFKICLRKLDPYLNIDPGTMSPIQHGEVFVTDDGAETDLDLGHYERFTGVKTTKNDNITTGKVYHNLLNKERKGDYLGQTVQIIPHVTDLINSFILHNTDALDFVICEIGGTVGDIESQPFLESIRQIGYKLSKNNTVFVHLTLVPYISATMELKTKPTQHSVKELSSVGIQPDIILYRSKIPLSQEQRDKIANLCNVSPTNIIPALDVKNIYELPISYHQYNLDTQILKHFNITSPEPNLDKWENILNISHVSTKTITIAIIGKYIKLLDAYKSLIEALEHAAIHNKTKLSIHWIDSRSLNNEITNTFDNVHAILIPGGFGDDGVEGKIIAIQYARINNIPFLGICMGMQLAIIEFARNVIHLEDANSTEFNFYCKNPVIHQLPELQQNLGGSMKLGSHPCYLKVDSKIFSIYKEQVINERRRHRYTVNLQYKDLLESHGLIFTGHSHHNNNDSLAEVIELKNHPWFIGVQFHPEFKSDPFQSHPLFMSFIQASLNYQETKRHKIS.

Positions 1 to 270 (MNNLTSTKFI…DTQILKHFNI (270 aa)) are amidoligase domain. Ser-18 is a binding site for CTP. Residue Ser-18 participates in UTP binding. Residues 19–24 (SLGKGL) and Asp-76 each bind ATP. Asp-76 and Glu-144 together coordinate Mg(2+). CTP is bound by residues 151–153 (DIE), 191–196 (KTKPTQ), and Lys-227. UTP is bound by residues 191 to 196 (KTKPTQ) and Lys-227. Residues 295–537 (TIAIIGKYIK…IQASLNYQET (243 aa)) enclose the Glutamine amidotransferase type-1 domain. Gly-356 lines the L-glutamine pocket. Cys-383 functions as the Nucleophile; for glutamine hydrolysis in the catalytic mechanism. L-glutamine contacts are provided by residues 384 to 387 (MGMQ), Glu-407, and Arg-462. Residues His-510 and Glu-512 contribute to the active site.

The protein belongs to the CTP synthase family. As to quaternary structure, homotetramer.

It carries out the reaction UTP + L-glutamine + ATP + H2O = CTP + L-glutamate + ADP + phosphate + 2 H(+). It catalyses the reaction L-glutamine + H2O = L-glutamate + NH4(+). The enzyme catalyses UTP + NH4(+) + ATP = CTP + ADP + phosphate + 2 H(+). It participates in pyrimidine metabolism; CTP biosynthesis via de novo pathway; CTP from UDP: step 2/2. Its activity is regulated as follows. Allosterically activated by GTP, when glutamine is the substrate; GTP has no effect on the reaction when ammonia is the substrate. The allosteric effector GTP functions by stabilizing the protein conformation that binds the tetrahedral intermediate(s) formed during glutamine hydrolysis. Inhibited by the product CTP, via allosteric rather than competitive inhibition. Its function is as follows. Catalyzes the ATP-dependent amination of UTP to CTP with either L-glutamine or ammonia as the source of nitrogen. Regulates intracellular CTP levels through interactions with the four ribonucleotide triphosphates. The polypeptide is CTP synthase (Ehrlichia ruminantium (strain Gardel)).